Here is a 163-residue protein sequence, read N- to C-terminus: Small ribosomal subunit protein uS5 (163 aa).

The 64-residue stretch at 8–71 (LVEKIVYLNR…ERAKKDMVQI (64 aa)) folds into the S5 DRBM domain.

It belongs to the universal ribosomal protein uS5 family. Part of the 30S ribosomal subunit. Contacts proteins S4 and S8.

Its function is as follows. With S4 and S12 plays an important role in translational accuracy. Located at the back of the 30S subunit body where it stabilizes the conformation of the head with respect to the body. In Nitratidesulfovibrio vulgaris (strain DSM 19637 / Miyazaki F) (Desulfovibrio vulgaris), this protein is Small ribosomal subunit protein uS5.